Here is a 68-residue protein sequence, read N- to C-terminus: Large ribosomal subunit protein bL33c (68 aa).

It belongs to the bacterial ribosomal protein bL33 family.

Its subcellular location is the plastid. The protein is Large ribosomal subunit protein bL33c of Cuscuta exaltata (Tall dodder).